Reading from the N-terminus, the 318-residue chain is Ribosomal RNA small subunit methyltransferase H (318 aa).

S-adenosyl-L-methionine contacts are provided by residues 34 to 36 (GGY), Asp52, Phe79, Asp100, and Gln107. The disordered stretch occupies residues 286–318 (GPAPDEARANPRARSAKLRAAARTAAPAWETVS). Residues 303–318 (LRAAARTAAPAWETVS) show a composition bias toward low complexity.

The protein belongs to the methyltransferase superfamily. RsmH family.

Its subcellular location is the cytoplasm. The catalysed reaction is cytidine(1402) in 16S rRNA + S-adenosyl-L-methionine = N(4)-methylcytidine(1402) in 16S rRNA + S-adenosyl-L-homocysteine + H(+). Functionally, specifically methylates the N4 position of cytidine in position 1402 (C1402) of 16S rRNA. This Paramagnetospirillum magneticum (strain ATCC 700264 / AMB-1) (Magnetospirillum magneticum) protein is Ribosomal RNA small subunit methyltransferase H.